A 264-amino-acid polypeptide reads, in one-letter code: Thymidylate synthase (264 aa).

DUMP is bound by residues Arg21 and 126 to 127 (RR). Cys146 (nucleophile) is an active-site residue. Residues 166–169 (RSAD), Asn177, and 207–209 (HLY) contribute to the dUMP site. Asp169 is a binding site for (6R)-5,10-methylene-5,6,7,8-tetrahydrofolate. Residue Ala263 coordinates (6R)-5,10-methylene-5,6,7,8-tetrahydrofolate.

This sequence belongs to the thymidylate synthase family. Bacterial-type ThyA subfamily. As to quaternary structure, homodimer.

It localises to the cytoplasm. It catalyses the reaction dUMP + (6R)-5,10-methylene-5,6,7,8-tetrahydrofolate = 7,8-dihydrofolate + dTMP. It functions in the pathway pyrimidine metabolism; dTTP biosynthesis. In terms of biological role, catalyzes the reductive methylation of 2'-deoxyuridine-5'-monophosphate (dUMP) to 2'-deoxythymidine-5'-monophosphate (dTMP) while utilizing 5,10-methylenetetrahydrofolate (mTHF) as the methyl donor and reductant in the reaction, yielding dihydrofolate (DHF) as a by-product. This enzymatic reaction provides an intracellular de novo source of dTMP, an essential precursor for DNA biosynthesis. The protein is Thymidylate synthase of Halorhodospira halophila (strain DSM 244 / SL1) (Ectothiorhodospira halophila (strain DSM 244 / SL1)).